A 124-amino-acid chain; its full sequence is MKKEQFYPLGIFLAAMLGGLVRYLVSTWLPASPDFPWGTLFVNYLGIFCLIYLVKGYLVYKGTSKGLILALGTGFCGGLTTFSSLMLDTVKLLDTGRYLSLILYLLLSIGGGLLLAYYLGRKKW.

The next 4 membrane-spanning stretches (helical) occupy residues 9-29 (LGIF…STWL), 34-54 (DFPW…IYLV), 67-87 (LILA…SLML), and 99-119 (LSLI…AYYL). Residues G77 and T80 each coordinate Na(+).

The protein belongs to the fluoride channel Fluc/FEX (TC 1.A.43) family.

It localises to the cell membrane. The catalysed reaction is fluoride(in) = fluoride(out). With respect to regulation, na(+) is not transported, but it plays an essential structural role and its presence is essential for fluoride channel function. In terms of biological role, fluoride-specific ion channel. Important for reducing fluoride concentration in the cell, thus reducing its toxicity. The polypeptide is Fluoride-specific ion channel FluC 2 (Streptococcus pneumoniae serotype 4 (strain ATCC BAA-334 / TIGR4)).